The primary structure comprises 185 residues: Translation initiation factor IF-3 (185 aa).

It belongs to the IF-3 family. In terms of assembly, monomer.

It localises to the cytoplasm. Functionally, IF-3 binds to the 30S ribosomal subunit and shifts the equilibrium between 70S ribosomes and their 50S and 30S subunits in favor of the free subunits, thus enhancing the availability of 30S subunits on which protein synthesis initiation begins. The protein is Translation initiation factor IF-3 of Streptococcus pneumoniae (strain Hungary19A-6).